A 337-amino-acid chain; its full sequence is MTKPQPPPILDFSVFYGHDSQAKAQLVQRVRECCLNNGFFQITGHKVSPELQRRTFDCAKRFFDLPLIEKKKIERSPDAFNRGYEAFQSHMSQPGSAPDRKEGLFLGPDLAEDHPYCVQKKLNCGPNRWPQGLDDLEEFKLVSMEYYAALFQLAKDVVAVLALTMDYEETFFDPLTEGAIATLRYLHYPPQPVGDAEAGLGTGAHRDYSCITLLLQDGTGGLQVLDEPTGQWLDVKPVPGAYIVNLANVFARMTNGHYKSALHRVVNKSGMERYSIPFFFTGNPDYVCECLSRFRKEGEPVRHPPATVHEVVAEAVRGTVERANRYNAERQGIHAAQ.

One can recognise a Fe2OG dioxygenase domain in the interval 179–282; the sequence is AIATLRYLHY…RYSIPFFFTG (104 aa). Residues His205, Asp207, and His263 each coordinate Fe cation. Arg273 serves as a coordination point for 2-oxoglutarate.

Belongs to the iron/ascorbate-dependent oxidoreductase family. Requires Fe(2+) as cofactor. Endocrocin is specifically produced in conidia.

The protein operates within secondary metabolite biosynthesis. Its function is as follows. 2-oxoglutarate-Fe(II) type oxidoreductase; part of the gene cluster that mediates the biosynthesis of endocrocin, a simple anthraquinone interesting for many biotechnological applications. The pathway begins with the synthesis of atrochrysone thioester by the polyketide synthase (PKS) encA. The atrochrysone carboxyl ACP thioesterase encB then breaks the thioester bond and releases the atrochrysone carboxylic acid from encA. The atrochrysone carboxylic acid is then converted to endocrocin anthrone which is further oxidized into endocrocin by encC. The exact function of encD has not been identified yet, but it negatively regulates endocrocin production, likely through the modification of endocrocin itself. This is 2-oxoglutarate-Fe(II) type oxidoreductase from Aspergillus fumigatus (strain ATCC MYA-4609 / CBS 101355 / FGSC A1100 / Af293) (Neosartorya fumigata).